A 174-amino-acid polypeptide reads, in one-letter code: Ribosome maturation factor RimP (174 aa).

The protein belongs to the RimP family.

Its subcellular location is the cytoplasm. Its function is as follows. Required for maturation of 30S ribosomal subunits. This chain is Ribosome maturation factor RimP, found in Bdellovibrio bacteriovorus (strain ATCC 15356 / DSM 50701 / NCIMB 9529 / HD100).